Here is a 1237-residue protein sequence, read N- to C-terminus: Anion exchange protein 2 (1237 aa).

Residues 1–237 (MSSAPRRPAS…SYNLQERRRI (237 aa)) are disordered. The Cytoplasmic portion of the chain corresponds to 1–704 (MSSAPRRPAS…DFRDALDPQC (704 aa)). 2 stretches are compositionally biased toward basic and acidic residues: residues 37–49 (ELHR…RFEE) and 58–75 (GGEE…EYHR). Basic residues-rich tracts occupy residues 76 to 85 (QSSHHIHHPL) and 94 to 110 (RRRK…RRRP). Phosphoserine is present on residues Ser113, Ser132, Ser144, Ser170, and Ser172. The span at 120-133 (TIEEGEEDEDEASE) shows a compositional bias: acidic residues. Over residues 137 to 151 (ARAPTQPSPASTPSS) the composition is skewed to low complexity. Gly residues predominate over residues 205–215 (GTAGGDDGGAS). Position 239 is a phosphoserine (Ser239). Thr253 is subject to Phosphothreonine. Lys270 is subject to N6-methyllysine. Residues 286-316 (RKNAKGSVQSGREGREPGPTPRARPRAPHKP) form a disordered region. A Phosphoserine modification is found at Ser439. The segment at 445–466 (SLLGHHHGQGAESDPHVTEPLI) is disordered. A membrane (anion exchange) region spans residues 704–1237 (CLAAVIFIYF…DEYNEMPMPV (534 aa)). 4 helical membrane-spanning segments follow: residues 705-725 (LAAV…FGGL), 750-770 (FCLL…LLVF), 792-812 (IGFW…SFLV), and 822-842 (IFAF…LVKI). The Extracellular portion of the chain corresponds to 843–893 (FQEHPLHGCSVSNSSEADSGDNATWAGTRVTLGLGNGSSAGPAGQGRPRGQ). Residues Asn855, Asn864, and Asn878 are each glycosylated (N-linked (GlcNAc...) asparagine). A helical transmembrane segment spans residues 894-914 (PNTALLSLVLMAGTFFIAFFL). The Cytoplasmic portion of the chain corresponds to 915-929 (RKFKNGRFFPGRVRR). The next 5 helical transmembrane spans lie at 930 to 950 (VIGD…DYSI), 985 to 1005 (FPVW…ILIF), 1032 to 1052 (LLLI…WLAA), 1086 to 1106 (RVTG…GDLL), and 1109 to 1129 (IPLA…LNGI). Cys1169 carries S-palmitoyl cysteine lipidation. Residues 1170-1190 (LALLWAVMSTAASLAFPFILI) form a helical membrane-spanning segment.

This sequence belongs to the anion exchanger (TC 2.A.31) family.

The protein localises to the apical cell membrane. The protein resides in the basolateral cell membrane. It catalyses the reaction hydrogencarbonate(in) + chloride(out) = hydrogencarbonate(out) + chloride(in). Functionally, sodium-independent anion exchanger which mediates the electroneutral exchange of chloride for bicarbonate ions across the cell membrane. Plays an important role in osteoclast differentiation and function. Regulates bone resorption and calpain-dependent actin cytoskeleton organization in osteoclasts via anion exchange-dependent control of pH. Essential for intracellular pH regulation in CD8(+) T-cells upon CD3 stimulation, modulating CD8(+) T-cell response. The polypeptide is Anion exchange protein 2 (SLC4A2) (Equus caballus (Horse)).